Reading from the N-terminus, the 437-residue chain is tRNA-2-methylthio-N(6)-dimethylallyladenosine synthase (437 aa).

The region spanning 1 to 115 (MKVYIETMGC…ISQVIHKEKA (115 aa)) is the MTTase N-terminal domain. Residues Cys-10, Cys-46, Cys-78, Cys-148, Cys-152, and Cys-155 each coordinate [4Fe-4S] cluster. One can recognise a Radical SAM core domain in the interval 134 to 367 (KKAQIRSLLN…QNRHKEILEE (234 aa)). Positions 370 to 436 (KLEVGKTHVV…KGRLMAATKG (67 aa)) constitute a TRAM domain.

It belongs to the methylthiotransferase family. MiaB subfamily. As to quaternary structure, monomer. Requires [4Fe-4S] cluster as cofactor.

The protein localises to the cytoplasm. The enzyme catalyses N(6)-dimethylallyladenosine(37) in tRNA + (sulfur carrier)-SH + AH2 + 2 S-adenosyl-L-methionine = 2-methylsulfanyl-N(6)-dimethylallyladenosine(37) in tRNA + (sulfur carrier)-H + 5'-deoxyadenosine + L-methionine + A + S-adenosyl-L-homocysteine + 2 H(+). Catalyzes the methylthiolation of N6-(dimethylallyl)adenosine (i(6)A), leading to the formation of 2-methylthio-N6-(dimethylallyl)adenosine (ms(2)i(6)A) at position 37 in tRNAs that read codons beginning with uridine. The polypeptide is tRNA-2-methylthio-N(6)-dimethylallyladenosine synthase (Helicobacter pylori (strain ATCC 700392 / 26695) (Campylobacter pylori)).